The following is a 135-amino-acid chain: MTLTLRVLAPDQSVFDDTADEIILPSTTGLLGVLPGHISMVTAIDFGVLRVLKNGNWDSIALTGGFAEVESNEVTVLVNKAEMGKNIDSGKAEAELEKAKNQLSQNKDQGNSPEKIKAQETLNKAKAWFQASKSD.

The span at 89–100 (SGKAEAELEKAK) shows a compositional bias: basic and acidic residues. The tract at residues 89–114 (SGKAEAELEKAKNQLSQNKDQGNSPE) is disordered. Residues 101–112 (NQLSQNKDQGNS) show a composition bias toward polar residues.

The protein belongs to the ATPase epsilon chain family. As to quaternary structure, F-type ATPases have 2 components, CF(1) - the catalytic core - and CF(0) - the membrane proton channel. CF(1) has five subunits: alpha(3), beta(3), gamma(1), delta(1), epsilon(1). CF(0) has three main subunits: a, b and c.

The protein localises to the cellular thylakoid membrane. Its function is as follows. Produces ATP from ADP in the presence of a proton gradient across the membrane. The protein is ATP synthase epsilon chain of Prochlorococcus marinus (strain NATL2A).